The chain runs to 171 residues: Glucagon family neuropeptides (171 aa).

Residues methionine 1–serine 22 form the signal peptide. The propeptide occupies serine 23–glutamate 76. The segment at valine 145 to leucine 153 is important for receptor binding. Lysine amide is present on lysine 164. The propeptide occupies valine 168–leucine 171.

This sequence belongs to the glucagon family.

It is found in the secreted. Functionally, primary role of GRF is to release GH from the pituitary. Its function is as follows. PACAP is a neuropeptide involved in diverse array of physiological processes through activating the PACAP subfamily of class B1 G protein-coupled receptors: VIP receptor 1 (VIPR1), VIP receptor 2 (VIPR2), and PACAP type I receptor (ADCYAP1R1). Exerts neuroprotective and general cytoprotective effects due to anti-apoptotic, anti-inflammatory, and antioxidant actions. This is Glucagon family neuropeptides (adcyap1) from Pelophylax ridibundus (Marsh frog).